Consider the following 263-residue polypeptide: (R)-S-adenosyl-L-methionine hydrolase (263 aa).

Positions 18, 82, and 181 each coordinate adenosine. (R)-S-adenosyl-L-methionine-binding residues include asparagine 181, tyrosine 221, serine 234, glutamate 239, and methionine 244.

It belongs to the SAM hydrolase / SAM-dependent halogenase family. In terms of assembly, homotrimer.

It catalyses the reaction (R)-S-adenosyl-L-methionine + H2O = adenosine + L-methionine + H(+). In terms of biological role, catalyzes the hydrolysis of S-adenosyl-L-methionine (SAM) into adenosine and L-methionine. Does not have chlorinase or fluorinase activity. This Methanocaldococcus jannaschii (strain ATCC 43067 / DSM 2661 / JAL-1 / JCM 10045 / NBRC 100440) (Methanococcus jannaschii) protein is (R)-S-adenosyl-L-methionine hydrolase.